Here is a 438-residue protein sequence, read N- to C-terminus: MKGPIVRITPNELHIKDASFYDEIYAGSGRIRNKDERFVKTFSAPHAMVSITDHAYHRVRRGLLGEFFSQRSVIKMEPIINGAIEKLSQRLHEACQTGAVINMDAAFAAMTADVITRHAWGQSGNYLDHGNFNKQWKDAVAGTMASRVLFRHFPYMLHILMAVPLPILLKLDPGVADILKIEGLVRRLSVENVNRGIVEKQEGKTIFDALNNVSVPPEQRTAKHLIDEGHILLLAGTETTAKALSTCLCYLLLAENKNVLLALQSELRQAFPNVSTWPKWTEAQKLPYLTAVINECLRLSHGLSTRLPRTAPKESLQYKQWHIPAATPVSQTAYFVHMDPSIFPDPERFEPERWIRASKEGLHLERYIVSFSKGSRQCLGINMAYAEIFLALTHIMRNFEFQLHDTSVDDVRLFRDRFFGAAQDGSVGVRVLVNEVKY.

Position 378 (Cys378) interacts with heme.

Belongs to the cytochrome P450 family. The cofactor is heme.

The protein operates within secondary metabolite biosynthesis. Cytochrome P450 monooxygenase; part of the cla gene cluster that produces clavatol and ortho-quinone methide. The clavatol biosynthesis cluster cla and the terrestric acid cluster tra are both involved in the production of peniphenones and penilactones. The non-reducing PKS claF is responsible for the formation of clavatol from successive condensations of 3 malonyl-CoA units, presumably with a simple acetyl-CoA starter unit, and 2 methylation steps. The esterase claE probably collaborates with claF by catalyzing the hydrolysis of ACP-bound acyl intermediates to free the ACP from stalled intermediates. The clavatol oxidase claD then converts clavatol to hydroxyclavatol. Spontaneous dehydration of hydroxyclavatol leads to the accumulation of the highly active ortho-quinone methide. On the other hand, the PKS-NRPS hybrid traA is involved in the formation of crustosic acid, with the help of traB and traD. The polyketide synthase module (PKS) of traA is responsible for the synthesis of the polyketide backbone via the condensation of an acetyl-CoA starter unit with 3 malonyl-CoA units. The downstream nonribosomal peptide synthetase (NRPS) module then amidates the carboxyl end of the polyketide with L-malic acid. Because traA lacks a designated enoylreductase (ER) domain, the required activity is provided the enoyl reductase traG. Crustosic acid undergoes decarboxylation and isomerization to the terrestric acid, catalyzed by the 2-oxoglutarate-dependent dioxygenase traH. Both acids are further converted to the 2 gamma-butyrolactones (R)-5-methyltetronic acid and (S)-5-carboxylmethyltetronic acid, with involvement of the cytochrome P450 monooxygenase claJ. Spontaneous addition of the methide to these gamma-butyrolactones leads to peniphenone D and penilactone D, which undergo again stereospecific attacking by methide to give penilactones A and B. This chain is Cytochrome P450 monooxygenase claJ, found in Penicillium crustosum (Blue mold fungus).